A 406-amino-acid polypeptide reads, in one-letter code: Tyrosine--tRNA ligase (406 aa).

The 'HIGH' region signature appears at 51 to 60 (PTAPDLHLGH). The short motif at 236–240 (KMSKS) is the 'KMSKS' region element. Lysine 239 lines the ATP pocket. The S4 RNA-binding domain maps to 345–405 (IWICKAMVEG…GKRKFLRLIV (61 aa)).

This sequence belongs to the class-I aminoacyl-tRNA synthetase family. TyrS type 2 subfamily. In terms of assembly, homodimer.

Its subcellular location is the cytoplasm. It catalyses the reaction tRNA(Tyr) + L-tyrosine + ATP = L-tyrosyl-tRNA(Tyr) + AMP + diphosphate + H(+). Catalyzes the attachment of tyrosine to tRNA(Tyr) in a two-step reaction: tyrosine is first activated by ATP to form Tyr-AMP and then transferred to the acceptor end of tRNA(Tyr). The polypeptide is Tyrosine--tRNA ligase (Wolinella succinogenes (strain ATCC 29543 / DSM 1740 / CCUG 13145 / JCM 31913 / LMG 7466 / NCTC 11488 / FDC 602W) (Vibrio succinogenes)).